The following is a 158-amino-acid chain: Transcription elongation factor GreA (158 aa).

Belongs to the GreA/GreB family.

Functionally, necessary for efficient RNA polymerase transcription elongation past template-encoded arresting sites. The arresting sites in DNA have the property of trapping a certain fraction of elongating RNA polymerases that pass through, resulting in locked ternary complexes. Cleavage of the nascent transcript by cleavage factors such as GreA or GreB allows the resumption of elongation from the new 3'terminus. GreA releases sequences of 2 to 3 nucleotides. In Sinorhizobium medicae (strain WSM419) (Ensifer medicae), this protein is Transcription elongation factor GreA.